We begin with the raw amino-acid sequence, 176 residues long: 3-hydroxyanthranilate 3,4-dioxygenase (176 aa).

Residue Arg-44 coordinates O2. Fe cation is bound by residues His-48, Glu-54, and His-92. Glu-54 is a binding site for substrate. Residues Arg-96 and Glu-106 each coordinate substrate. Fe cation contacts are provided by Cys-121, Cys-124, Cys-158, and Cys-161.

It belongs to the 3-HAO family. Homodimer. Fe(2+) serves as cofactor.

It carries out the reaction 3-hydroxyanthranilate + O2 = (2Z,4Z)-2-amino-3-carboxymuconate 6-semialdehyde. Its pathway is cofactor biosynthesis; NAD(+) biosynthesis; quinolinate from L-kynurenine: step 3/3. Functionally, catalyzes the oxidative ring opening of 3-hydroxyanthranilate to 2-amino-3-carboxymuconate semialdehyde, which spontaneously cyclizes to quinolinate. This chain is 3-hydroxyanthranilate 3,4-dioxygenase, found in Xanthomonas oryzae pv. oryzae (strain MAFF 311018).